The sequence spans 123 residues: Small ribosomal subunit protein uS12 (123 aa).

The disordered stretch occupies residues 1–22 (MATINQLVRQPRKRSVEKSDVP). D89 carries the post-translational modification 3-methylthioaspartic acid. A disordered region spans residues 100 to 123 (GSLDTSGVKGRNQGRSKYGTKRPK). Positions 111–123 (NQGRSKYGTKRPK) are enriched in basic residues.

It belongs to the universal ribosomal protein uS12 family. Part of the 30S ribosomal subunit. Contacts proteins S8 and S17. May interact with IF1 in the 30S initiation complex.

In terms of biological role, with S4 and S5 plays an important role in translational accuracy. Its function is as follows. Interacts with and stabilizes bases of the 16S rRNA that are involved in tRNA selection in the A site and with the mRNA backbone. Located at the interface of the 30S and 50S subunits, it traverses the body of the 30S subunit contacting proteins on the other side and probably holding the rRNA structure together. The combined cluster of proteins S8, S12 and S17 appears to hold together the shoulder and platform of the 30S subunit. The polypeptide is Small ribosomal subunit protein uS12 (Pseudomonas putida (strain GB-1)).